The sequence spans 306 residues: Diacylglycerol kinase (306 aa).

The DAGKc domain maps to 1 to 132 (MRKRARIIYN…VDIGKMNSRY (132 aa)). ATP-binding positions include 10–14 (NPTSG), threonine 41, 67–73 (GDGTLNE), and threonine 94. Mg(2+) contacts are provided by arginine 213, aspartate 216, and tyrosine 218. Catalysis depends on glutamate 273, which acts as the Proton acceptor.

Belongs to the diacylglycerol/lipid kinase family. In terms of assembly, homodimer. Mg(2+) is required as a cofactor.

It carries out the reaction a 1,2-diacyl-sn-glycerol + ATP = a 1,2-diacyl-sn-glycero-3-phosphate + ADP + H(+). Functionally, catalyzes the phosphorylation of diacylglycerol (DAG) into phosphatidic acid. Is a key enzyme involved in the production of lipoteichoic acid by reintroducing DAG formed from the breakdown of membrane phospholipids into the phosphatidylglycerol biosynthetic pathway. The chain is Diacylglycerol kinase (dagK) from Staphylococcus carnosus (strain TM300).